The chain runs to 553 residues: Hydroxylamine reductase (553 aa).

Residues C3, C6, C18, and C25 each coordinate [2Fe-2S] cluster. Residues H252, E276, C320, C408, C436, C461, E495, and K497 each coordinate hybrid [4Fe-2O-2S] cluster. The residue at position 408 (C408) is a Cysteine persulfide.

This sequence belongs to the HCP family. The cofactor is [2Fe-2S] cluster. Hybrid [4Fe-2O-2S] cluster serves as cofactor.

It is found in the cytoplasm. It carries out the reaction A + NH4(+) + H2O = hydroxylamine + AH2 + H(+). Catalyzes the reduction of hydroxylamine to form NH(3) and H(2)O. In Photobacterium phosphoreum, this protein is Hydroxylamine reductase.